The primary structure comprises 211 residues: Ribonuclease HII (211 aa).

The RNase H type-2 domain occupies 11–200; it reads EFIAGVDEVG…VKKLLSTLLS (190 aa). D17, E18, and D109 together coordinate a divalent metal cation.

This sequence belongs to the RNase HII family. The cofactor is Mn(2+). It depends on Mg(2+) as a cofactor.

It is found in the cytoplasm. It carries out the reaction Endonucleolytic cleavage to 5'-phosphomonoester.. In terms of biological role, endonuclease that specifically degrades the RNA of RNA-DNA hybrids. In Histophilus somni (strain 2336) (Haemophilus somnus), this protein is Ribonuclease HII.